Reading from the N-terminus, the 356-residue chain is Histidinol-phosphate aminotransferase (356 aa).

N6-(pyridoxal phosphate)lysine is present on lysine 213.

Belongs to the class-II pyridoxal-phosphate-dependent aminotransferase family. Histidinol-phosphate aminotransferase subfamily. As to quaternary structure, homodimer. The cofactor is pyridoxal 5'-phosphate.

It catalyses the reaction L-histidinol phosphate + 2-oxoglutarate = 3-(imidazol-4-yl)-2-oxopropyl phosphate + L-glutamate. It functions in the pathway amino-acid biosynthesis; L-histidine biosynthesis; L-histidine from 5-phospho-alpha-D-ribose 1-diphosphate: step 7/9. The chain is Histidinol-phosphate aminotransferase from Clostridium novyi (strain NT).